Reading from the N-terminus, the 263-residue chain is Ribonuclease HII (263 aa).

In terms of domain architecture, RNase H type-2 spans 39–257 (AFFTGIDEAG…VKPAAAPHAA (219 aa)). Aspartate 45, glutamate 46, and aspartate 157 together coordinate a divalent metal cation.

Belongs to the RNase HII family. The cofactor is Mn(2+). Requires Mg(2+) as cofactor.

The protein localises to the cytoplasm. The enzyme catalyses Endonucleolytic cleavage to 5'-phosphomonoester.. In terms of biological role, endonuclease that specifically degrades the RNA of RNA-DNA hybrids. The sequence is that of Ribonuclease HII from Oleidesulfovibrio alaskensis (strain ATCC BAA-1058 / DSM 17464 / G20) (Desulfovibrio alaskensis).